The chain runs to 211 residues: Large ribosomal subunit protein uL3 (211 aa).

Residues 122–147 (AIKRHGQSRGPMAHGSRYHRRPGSMG) form a disordered region.

The protein belongs to the universal ribosomal protein uL3 family. As to quaternary structure, part of the 50S ribosomal subunit. Forms a cluster with proteins L14 and L19.

Functionally, one of the primary rRNA binding proteins, it binds directly near the 3'-end of the 23S rRNA, where it nucleates assembly of the 50S subunit. This Geobacillus sp. (strain WCH70) protein is Large ribosomal subunit protein uL3.